We begin with the raw amino-acid sequence, 180 residues long: Small ribosomal subunit protein uS5 (180 aa).

The tract at residues 1–20 is disordered; that stretch reads MAKMQGRMQGKVAPGDDRGD. The S5 DRBM domain maps to 22–85; it reads LKEKMVAINR…DEARRKMIKV (64 aa).

The protein belongs to the universal ribosomal protein uS5 family. As to quaternary structure, part of the 30S ribosomal subunit. Contacts proteins S4 and S8.

Its function is as follows. With S4 and S12 plays an important role in translational accuracy. In terms of biological role, located at the back of the 30S subunit body where it stabilizes the conformation of the head with respect to the body. The sequence is that of Small ribosomal subunit protein uS5 from Nitrosospira multiformis (strain ATCC 25196 / NCIMB 11849 / C 71).